We begin with the raw amino-acid sequence, 143 residues long: ATP synthase subunit b' (143 aa).

Residues 6-26 form a helical membrane-spanning segment; the sequence is ATLPLMALQFLVLAVVLNAVF.

Belongs to the ATPase B chain family. As to quaternary structure, F-type ATPases have 2 components, F(1) - the catalytic core - and F(0) - the membrane proton channel. F(1) has five subunits: alpha(3), beta(3), gamma(1), delta(1), epsilon(1). F(0) has four main subunits: a(1), b(1), b'(1) and c(10-14). The alpha and beta chains form an alternating ring which encloses part of the gamma chain. F(1) is attached to F(0) by a central stalk formed by the gamma and epsilon chains, while a peripheral stalk is formed by the delta, b and b' chains.

The protein localises to the cellular thylakoid membrane. Functionally, f(1)F(0) ATP synthase produces ATP from ADP in the presence of a proton or sodium gradient. F-type ATPases consist of two structural domains, F(1) containing the extramembraneous catalytic core and F(0) containing the membrane proton channel, linked together by a central stalk and a peripheral stalk. During catalysis, ATP synthesis in the catalytic domain of F(1) is coupled via a rotary mechanism of the central stalk subunits to proton translocation. In terms of biological role, component of the F(0) channel, it forms part of the peripheral stalk, linking F(1) to F(0). The b'-subunit is a diverged and duplicated form of b found in plants and photosynthetic bacteria. This chain is ATP synthase subunit b', found in Gloeothece citriformis (strain PCC 7424) (Cyanothece sp. (strain PCC 7424)).